The sequence spans 20 residues: Fibrinolytic zinc metalloproteinase (20 aa).

A Peptidase M12B domain is found at Arg-7–Asn-20.

Requires Zn(2+) as cofactor.

It localises to the secreted. Hydrolyzes alpha and beta chains of human fibrinogen and human fibrin. No activity against the gamma chain of human fibrinogen, human thrombin, bovine serum albumin, ovalbumin and hemoglobin. Has anticoagulant activity on human plasma and protects mice against death due from experimentally induced platelet thromboembolism with an ED(50) of 40 ug/kg. This Ganoderma lucidum (Ling zhi medicinal fungus) protein is Fibrinolytic zinc metalloproteinase.